We begin with the raw amino-acid sequence, 166 residues long: CDP-archaeol synthase (166 aa).

The next 4 membrane-spanning stretches (helical) occupy residues 42–62 (LVLG…VQDA), 73–93 (VLSV…KSFV), 103–123 (AAWP…LLLI), and 128–148 (FAAV…TPLL).

This sequence belongs to the CDP-archaeol synthase family. Requires Mg(2+) as cofactor.

It is found in the cell membrane. It carries out the reaction 2,3-bis-O-(geranylgeranyl)-sn-glycerol 1-phosphate + CTP + H(+) = CDP-2,3-bis-O-(geranylgeranyl)-sn-glycerol + diphosphate. Its pathway is membrane lipid metabolism; glycerophospholipid metabolism. Its function is as follows. Catalyzes the formation of CDP-2,3-bis-(O-geranylgeranyl)-sn-glycerol (CDP-archaeol) from 2,3-bis-(O-geranylgeranyl)-sn-glycerol 1-phosphate (DGGGP) and CTP. This reaction is the third ether-bond-formation step in the biosynthesis of archaeal membrane lipids. In Methanosphaerula palustris (strain ATCC BAA-1556 / DSM 19958 / E1-9c), this protein is CDP-archaeol synthase.